We begin with the raw amino-acid sequence, 266 residues long: 2-Cys peroxiredoxin BAS1, chloroplastic (266 aa).

A compositionally biased stretch (low complexity) spans 1 to 16 (MASVASSTTLISSPSS). Residues 1-25 (MASVASSTTLISSPSSRVFPAKSSL) form a disordered region. The transit peptide at 1–65 (MASVASSTTL…SSTSRRSFAV (65 aa)) directs the protein to the chloroplast. Positions 73-232 (PLVGNKAPDF…TMRTLQALQY (160 aa)) constitute a Thioredoxin domain. Residue Cys119 is the Cysteine sulfenic acid (-SOH) intermediate of the active site.

It belongs to the peroxiredoxin family. AhpC/Prx1 subfamily. In terms of assembly, homodimer; disulfide-linked, upon oxidation. Interacts with the plastidial thioredoxin CDSP32. Interacts with the plastidial NADPH-dependent thioredoxin reductase ANTR-C.

It localises to the plastid. The protein resides in the chloroplast. It carries out the reaction a hydroperoxide + [thioredoxin]-dithiol = an alcohol + [thioredoxin]-disulfide + H2O. Functionally, thiol-specific peroxidase that catalyzes the reduction of hydrogen peroxide and organic hydroperoxides to water and alcohols, respectively. Plays a role in cell protection against oxidative stress by detoxifying peroxides. May be an antioxidant enzyme particularly in the developing shoot and photosynthesizing leaf. This chain is 2-Cys peroxiredoxin BAS1, chloroplastic (BAS1), found in Arabidopsis thaliana (Mouse-ear cress).